A 132-amino-acid polypeptide reads, in one-letter code: Small ribosomal subunit protein uS8 (132 aa).

It belongs to the universal ribosomal protein uS8 family. Part of the 30S ribosomal subunit. Contacts proteins S5 and S12.

One of the primary rRNA binding proteins, it binds directly to 16S rRNA central domain where it helps coordinate assembly of the platform of the 30S subunit. In Cereibacter sphaeroides (strain ATCC 17025 / ATH 2.4.3) (Rhodobacter sphaeroides), this protein is Small ribosomal subunit protein uS8.